Reading from the N-terminus, the 100-residue chain is MAKKSMIERDKRRSRLVAKYAAKREALKEEFRQAETLEDKLAVHQKLQDLPRNSAPNRRRNRCQVTGRPRSYYRDFGLCRNVLREWAHQGLLPGVTKSSW.

This sequence belongs to the universal ribosomal protein uS14 family. In terms of assembly, part of the 30S ribosomal subunit. Contacts proteins S3 and S10.

Binds 16S rRNA, required for the assembly of 30S particles and may also be responsible for determining the conformation of the 16S rRNA at the A site. The chain is Small ribosomal subunit protein uS14 from Synechocystis sp. (strain ATCC 27184 / PCC 6803 / Kazusa).